The sequence spans 255 residues: Type III pantothenate kinase (255 aa).

6–13 (DVGNTNIV) contacts ATP. Substrate is bound by residues Y100 and 107–110 (GADR). The active-site Proton acceptor is the D109. D129 is a binding site for K(+). T132 is an ATP binding site. A substrate-binding site is contributed by T184.

Belongs to the type III pantothenate kinase family. In terms of assembly, homodimer. The cofactor is NH4(+). K(+) is required as a cofactor.

Its subcellular location is the cytoplasm. It catalyses the reaction (R)-pantothenate + ATP = (R)-4'-phosphopantothenate + ADP + H(+). Its pathway is cofactor biosynthesis; coenzyme A biosynthesis; CoA from (R)-pantothenate: step 1/5. Catalyzes the phosphorylation of pantothenate (Pan), the first step in CoA biosynthesis. The chain is Type III pantothenate kinase from Thermoanaerobacter sp. (strain X514).